Here is a 252-residue protein sequence, read N- to C-terminus: Phosphoribosylaminoimidazole-succinocarboxamide synthase 1 (252 aa).

This sequence belongs to the SAICAR synthetase family.

The enzyme catalyses 5-amino-1-(5-phospho-D-ribosyl)imidazole-4-carboxylate + L-aspartate + ATP = (2S)-2-[5-amino-1-(5-phospho-beta-D-ribosyl)imidazole-4-carboxamido]succinate + ADP + phosphate + 2 H(+). It participates in purine metabolism; IMP biosynthesis via de novo pathway; 5-amino-1-(5-phospho-D-ribosyl)imidazole-4-carboxamide from 5-amino-1-(5-phospho-D-ribosyl)imidazole-4-carboxylate: step 1/2. The sequence is that of Phosphoribosylaminoimidazole-succinocarboxamide synthase 1 (purC1) from Caulobacter vibrioides (strain ATCC 19089 / CIP 103742 / CB 15) (Caulobacter crescentus).